The primary structure comprises 500 residues: Cobyric acid synthase (500 aa).

Residues 251-449 (KLNIVIPIMP…LHGVFDHPDA (199 aa)) form the GATase cobBQ-type domain. C332 (nucleophile) is an active-site residue. The active site involves H441.

The protein belongs to the CobB/CobQ family. CobQ subfamily.

The protein operates within cofactor biosynthesis; adenosylcobalamin biosynthesis. Catalyzes amidations at positions B, D, E, and G on adenosylcobyrinic A,C-diamide. NH(2) groups are provided by glutamine, and one molecule of ATP is hydrogenolyzed for each amidation. This chain is Cobyric acid synthase, found in Marinomonas sp. (strain MWYL1).